The primary structure comprises 86 residues: Toxin Td1 (86 aa).

Positions 1–20 (MIRFILFISCFFLIGMVIEC) are cleaved as a signal peptide. Positions 21–83 (KDGYLMEPNG…VWERATNRCG (63 aa)) constitute an LCN-type CS-alpha/beta domain. Intrachain disulfides connect C31–C82, C35–C57, C43–C63, and C47–C65. Position 84 is a lysine amide (K84).

Expressed by the venom gland.

It localises to the secreted. Beta toxins bind voltage-independently at site-4 of sodium channels (Nav) and shift the voltage of activation toward more negative potentials thereby affecting sodium channel activation and promoting spontaneous and repetitive firing. The chain is Toxin Td1 from Tityus discrepans (Venezuelan scorpion).